We begin with the raw amino-acid sequence, 367 residues long: Phosphoribosylaminoimidazole-succinocarboxamide synthase (367 aa).

This sequence belongs to the SAICAR synthetase family.

The catalysed reaction is 5-amino-1-(5-phospho-D-ribosyl)imidazole-4-carboxylate + L-aspartate + ATP = (2S)-2-[5-amino-1-(5-phospho-beta-D-ribosyl)imidazole-4-carboxamido]succinate + ADP + phosphate + 2 H(+). It participates in purine metabolism; IMP biosynthesis via de novo pathway; 5-amino-1-(5-phospho-D-ribosyl)imidazole-4-carboxamide from 5-amino-1-(5-phospho-D-ribosyl)imidazole-4-carboxylate: step 1/2. The chain is Phosphoribosylaminoimidazole-succinocarboxamide synthase from Shewanella amazonensis (strain ATCC BAA-1098 / SB2B).